A 569-amino-acid chain; its full sequence is Linoleate hydratase (569 aa).

Residue Tyr-87 coordinates FAD. Tyr-205 functions as the Proton donor in the catalytic mechanism. Residues Val-254, Ser-300, and Thr-524 each contribute to the FAD site.

Belongs to the oleate hydratase family. FAD is required as a cofactor.

It is found in the cell membrane. Its subcellular location is the cytoplasm. The catalysed reaction is (9Z,12Z)-octadecadienoate + H2O = (10S)-hydroxy-(12Z)-octadecenoate. It carries out the reaction (10E,12Z)-octadecadienoate + H2O = (10S)-hydroxy-(12Z)-octadecenoate. The enzyme catalyses (9Z)-octadecenoate + H2O = 10-hydroxyoctadecanoate. It catalyses the reaction (10E)-octadecenoate + H2O = 10-hydroxyoctadecanoate. The catalysed reaction is (9E,11E)-octadecadienoate + H2O = 10-hydroxy-(11E)-octadecenoate. It carries out the reaction (9Z,11E)-octadecadienoate + H2O = 10-hydroxy-(11E)-octadecenoate. The enzyme catalyses (9Z)-hexadecenoate + H2O = 10-hydroxyhexadecanoate. It catalyses the reaction (9Z,12Z,15Z)-octadecatrienoate + H2O = (10S)-hydroxy-(12Z,15Z)-octadecadienoate. The catalysed reaction is (6Z,9Z,12Z)-octadecatrienoate + H2O = (10S)-hydroxy-(6Z,12Z)-octadecadienoate. It carries out the reaction (6Z,9Z,12Z,15Z)-octadecatetraenoate + H2O = (10S)-hydroxy-(6Z,12Z,15Z)-octadecatrienoate. Its pathway is lipid metabolism; fatty acid metabolism. With respect to regulation, the addition of NADH or NADPH highly increases catalytic activity, likely by reducing the cofactor FAD to FADH2. The hydration and dehydration reactions are strongly inhibited by Ag(+), Fe(2+), Cu(2+), Zn(2+), Hg(2+), and Fe(3+). Its function is as follows. Is involved in a saturation metabolic pathway of polyunsaturated fatty acids, that detoxifies unsaturated fatty acids and generates hydroxy fatty acids, oxo fatty acids, conjugated fatty acids such as conjugated linoleic acids (CLAs), and partially saturated trans-fatty acids as intermediates. CLA-HY catalyzes the hydration and dehydration steps in the production of 10-hydroxy-cis-12-octadecenoate, trans-10,cis-12-CLA, cis-9,trans-11-CLA, trans-9,trans-11-CLA, oleate and trans-10-octadecenoate during linoleate metabolism. Is also able to hydrate palmitoleic acid (cis-9-hexadecenoic acid), oleic acid, alpha-linolenic acid, gamma-linolenic acid, and stearidonic acid into the corresponding 10-hydroxy fatty acids, and dehydrate 10-hydroxy-cis-12,cis-15-octadecadienoic acid, 10-hydroxy-cis-6,cis-12-octadecadienoic acid, and 10-hydroxyoctadecanoic acid into the corresponding fatty acids with cis double bonds at the Delta9 position. As part of the gut microbiome, this enzyme modifies host fatty acid composition and is expected to improve human health by altering lipid metabolism related to the onset of metabolic syndrome. Shows regioselectivity for Delta9 double bond hydration, generating C10 hydroxy groups in the (S)-configuration with high enantioselectivity, when another double bond is in position 12. Is not able to hydrate fatty acids with a trans carbon-carbon double bond at Delta9 position (elaidic acid, trans-9-octadecenoic acid), fatty acid esters (methyl linoleate, monolinolein, dilinolein, and trilinolein), and conjugated fatty acids (conjugated linoleic acids), as well as fatty acids with other chain lengths, such as myristoleic acid (cis-9-tetradecenoic acid), arachidonic acid (cis-5,cis-8,cis-11,cis-14-eicosatetraenoic acid), EPA (cis-5,cis-8,cis-11,cis-14,cis-17-eicosapentaenoic acid), DHA (cis-4,cis-7,cis-10,cis-13,cis-16,cis-19-docosahexaenoic acid) and fatty acids with a cis carbon-carbon double bond at Delta11 position, such as cis-vaccenic acid and cis-11-octadecenoic acid, or fatty alcohols, such as linoleyl alcohol. Is not able to dehydrate 12-hydroxy, 3-hydroxy, and 9-hydroxy fatty acids. The sequence is that of Linoleate hydratase from Lactiplantibacillus plantarum (Lactobacillus plantarum).